The sequence spans 354 residues: MADRVKTVGWAAHDSSGFLSPFQFTRRATGEEDVRLKVLYCGVCHSDLHNIKNEMGFTSYPCVPGHEVVGEVTEVGNKVKKFIIGDKVGVGLFVDSCGECEQCVNDVETYCPKLKMAYLSIDDDGTVIQGGYSKEMVIKERYVFRWPENLPLPAGTPLLGAGSTVYSPMKYYGLDKSGQHLGVVGLGGLGHLAVKFAKAFGLKVTVISTSPSKKDEAINHLGADAFLVSTDQEQTQKAMSTMDGIIDTVSAPHALMPLFSLLKPNGKLIVVGAPNKPVELDILFLVMGRKMLGTSAVGGVKETQEMIDFAAKHGIVADVEVVEMENVNNAMERLAKGDVRYRFVLDIGNATVAV.

Cysteine 44 is a binding site for Zn(2+). Residue 45–49 participates in NAD(+) binding; sequence HSDLH. Zn(2+)-binding residues include histidine 66, cysteine 97, cysteine 100, cysteine 103, and cysteine 111. NAD(+) is bound by residues 185–190, lysine 214, 271–273, 295–297, and arginine 340; these read GLGGLG, VGA, and SAV.

The protein belongs to the zinc-containing alcohol dehydrogenase family. Requires Zn(2+) as cofactor. In terms of tissue distribution, expressed in leaf epidermis.

The catalysed reaction is 3,17-didehydrostemmadenine + NADPH + H2O = (16S)-deshydroxymethyl-stemmadenine + formate + NADP(+). It carries out the reaction 3,17-didehydrostemmadenine + NADPH + H2O = (16R)-deshydroxymethyl-stemmadenine + formate + NADP(+). The enzyme catalyses 17-dehydrostemmadenine + NADP(+) = 3,17-didehydrostemmadenine + NADPH. It participates in alkaloid biosynthesis. Component of iboga and aspidosperma monoterpenoid indole alkaloids (MIAs, e.g. tabersonine and catharanthine) biosynthesis pathway from 19E-geissoschizine. Catalyzes the first oxidation step of the unstable intermediate product resulting from the reaction triggered by the geissoschizine oxidase (GO) in the stemmadenine biosynthesis process from 19E-geissoschizine. The chain is Protein REDOX 1 from Catharanthus roseus (Madagascar periwinkle).